We begin with the raw amino-acid sequence, 390 residues long: Chorismate synthase (390 aa).

The NADP(+) site is built by Arg39 and Arg45. Residues 132-134 (RSS), 253-254 (NA), Gly298, 313-317 (KPIPT), and Arg339 each bind FMN.

The protein belongs to the chorismate synthase family. As to quaternary structure, homotetramer. Requires FMNH2 as cofactor.

The enzyme catalyses 5-O-(1-carboxyvinyl)-3-phosphoshikimate = chorismate + phosphate. Its pathway is metabolic intermediate biosynthesis; chorismate biosynthesis; chorismate from D-erythrose 4-phosphate and phosphoenolpyruvate: step 7/7. Functionally, catalyzes the anti-1,4-elimination of the C-3 phosphate and the C-6 proR hydrogen from 5-enolpyruvylshikimate-3-phosphate (EPSP) to yield chorismate, which is the branch point compound that serves as the starting substrate for the three terminal pathways of aromatic amino acid biosynthesis. This reaction introduces a second double bond into the aromatic ring system. The chain is Chorismate synthase from Shouchella clausii (strain KSM-K16) (Alkalihalobacillus clausii).